A 247-amino-acid chain; its full sequence is Trypsin-2 (247 aa).

The signal sequence occupies residues 1–15 (MNLLLILTFVAAAVA). A propeptide spans 16–23 (APFDDDDK) (activation peptide). One can recognise a Peptidase S1 domain in the interval 24-244 (IVGGYICEEN…YVDWIKDTIA (221 aa)). Disulfide bonds link Cys30/Cys160, Cys48/Cys64, Cys171/Cys185, and Cys196/Cys220. The Charge relay system role is filled by His63. Residues Glu75, Asn77, Val80, and Glu85 each contribute to the Ca(2+) site. Catalysis depends on Asp107, which acts as the Charge relay system. Tyr154 is subject to Sulfotyrosine. Catalysis depends on Ser200, which acts as the Charge relay system.

Belongs to the peptidase S1 family. It depends on Ca(2+) as a cofactor. In terms of processing, sulfated on tyrosine. Sulfation at Tyr-154 increases selectivity towards basic versus apolar residues at the P2' position of inhibitors that bind in a substrate-like fashion. Although the increase in selectivity is relatively small, it may facilitate digestion of a broader range of dietary proteins. As to expression, expressed in Paneth cells, at the base of small intestinal crypts.

It is found in the secreted. Its subcellular location is the extracellular space. It catalyses the reaction Preferential cleavage: Arg-|-Xaa, Lys-|-Xaa.. Functionally, in the ileum, may be involved in defensin processing, including DEFA5. This is Trypsin-2 (PRSS2) from Homo sapiens (Human).